Reading from the N-terminus, the 233-residue chain is Putative N-acetylmannosamine-6-phosphate 2-epimerase (233 aa).

The protein belongs to the NanE family.

It catalyses the reaction an N-acyl-D-glucosamine 6-phosphate = an N-acyl-D-mannosamine 6-phosphate. Its pathway is amino-sugar metabolism; N-acetylneuraminate degradation; D-fructose 6-phosphate from N-acetylneuraminate: step 3/5. Converts N-acetylmannosamine-6-phosphate (ManNAc-6-P) to N-acetylglucosamine-6-phosphate (GlcNAc-6-P). In Yersinia pseudotuberculosis serotype O:1b (strain IP 31758), this protein is Putative N-acetylmannosamine-6-phosphate 2-epimerase.